A 1058-amino-acid polypeptide reads, in one-letter code: Carbamoyl phosphate synthase large chain (1058 aa).

A carboxyphosphate synthetic domain region spans residues 1–401 (MPKRTDIQKI…SLLKACRSLE (401 aa)). Arg129, Arg169, Gly175, Gly176, Arg208, Ile210, Glu215, Gly241, Ile242, His243, Gln284, and Glu298 together coordinate ATP. The 195-residue stretch at 133-327 (KQLMEELEQP…IAKLAAKIAV (195 aa)) folds into the ATP-grasp 1 domain. The Mg(2+) site is built by Gln284, Glu298, and Asn300. The Mn(2+) site is built by Gln284, Glu298, and Asn300. The interval 402–546 (IGVHHNEIPE…YSTYGWENES (145 aa)) is oligomerization domain. The segment at 547-929 (IRSDKESVLV…ALYKAFEASY (383 aa)) is carbamoyl phosphate synthetic domain. The ATP-grasp 2 domain maps to 671-861 (EQALKELDIP…MAQVATKLIL (191 aa)). Positions 707, 746, 748, 752, 777, 778, 779, 780, 820, and 832 each coordinate ATP. Positions 820, 832, and 834 each coordinate Mg(2+). Mn(2+)-binding residues include Gln820, Glu832, and Asn834. The MGS-like domain maps to 930–1058 (LHLPTFGNVV…ESRSFVTEAI (129 aa)). The tract at residues 930 to 1058 (LHLPTFGNVV…ESRSFVTEAI (129 aa)) is allosteric domain.

The protein belongs to the CarB family. As to quaternary structure, composed of two chains; the small (or glutamine) chain promotes the hydrolysis of glutamine to ammonia, which is used by the large (or ammonia) chain to synthesize carbamoyl phosphate. Tetramer of heterodimers (alpha,beta)4. It depends on Mg(2+) as a cofactor. Requires Mn(2+) as cofactor.

The catalysed reaction is hydrogencarbonate + L-glutamine + 2 ATP + H2O = carbamoyl phosphate + L-glutamate + 2 ADP + phosphate + 2 H(+). It carries out the reaction hydrogencarbonate + NH4(+) + 2 ATP = carbamoyl phosphate + 2 ADP + phosphate + 2 H(+). Its pathway is amino-acid biosynthesis; L-arginine biosynthesis; carbamoyl phosphate from bicarbonate: step 1/1. The protein operates within pyrimidine metabolism; UMP biosynthesis via de novo pathway; (S)-dihydroorotate from bicarbonate: step 1/3. In terms of biological role, large subunit of the glutamine-dependent carbamoyl phosphate synthetase (CPSase). CPSase catalyzes the formation of carbamoyl phosphate from the ammonia moiety of glutamine, carbonate, and phosphate donated by ATP, constituting the first step of 2 biosynthetic pathways, one leading to arginine and/or urea and the other to pyrimidine nucleotides. The large subunit (synthetase) binds the substrates ammonia (free or transferred from glutamine from the small subunit), hydrogencarbonate and ATP and carries out an ATP-coupled ligase reaction, activating hydrogencarbonate by forming carboxy phosphate which reacts with ammonia to form carbamoyl phosphate. The protein is Carbamoyl phosphate synthase large chain of Streptococcus pneumoniae (strain Hungary19A-6).